Consider the following 371-residue polypeptide: 4-hydroxy-3-methylbut-2-en-1-yl diphosphate synthase (flavodoxin) (371 aa).

Residues Cys-270, Cys-273, Cys-305, and Glu-312 each coordinate [4Fe-4S] cluster.

Belongs to the IspG family. [4Fe-4S] cluster is required as a cofactor.

It catalyses the reaction (2E)-4-hydroxy-3-methylbut-2-enyl diphosphate + oxidized [flavodoxin] + H2O + 2 H(+) = 2-C-methyl-D-erythritol 2,4-cyclic diphosphate + reduced [flavodoxin]. It participates in isoprenoid biosynthesis; isopentenyl diphosphate biosynthesis via DXP pathway; isopentenyl diphosphate from 1-deoxy-D-xylulose 5-phosphate: step 5/6. Its function is as follows. Converts 2C-methyl-D-erythritol 2,4-cyclodiphosphate (ME-2,4cPP) into 1-hydroxy-2-methyl-2-(E)-butenyl 4-diphosphate. This chain is 4-hydroxy-3-methylbut-2-en-1-yl diphosphate synthase (flavodoxin), found in Shewanella pealeana (strain ATCC 700345 / ANG-SQ1).